The sequence spans 380 residues: tRNA(Met) cytidine acetate ligase (380 aa).

ATP contacts are provided by residues isoleucine 7 to histidine 20, glycine 100, asparagine 153, and arginine 178.

The protein belongs to the TmcAL family.

The protein resides in the cytoplasm. The enzyme catalyses cytidine(34) in elongator tRNA(Met) + acetate + ATP = N(4)-acetylcytidine(34) in elongator tRNA(Met) + AMP + diphosphate. In terms of biological role, catalyzes the formation of N(4)-acetylcytidine (ac(4)C) at the wobble position of elongator tRNA(Met), using acetate and ATP as substrates. First activates an acetate ion to form acetyladenylate (Ac-AMP) and then transfers the acetyl group to tRNA to form ac(4)C34. The protein is tRNA(Met) cytidine acetate ligase of Staphylococcus haemolyticus (strain JCSC1435).